The sequence spans 258 residues: MTQRIKCIIAYDGTHFSGYQIQPGKRTVQGEFEEVLRRMHKGTKVRVAASGRTDAGVHAYGQVIHFDTPLSLSSEQWKKALNAQLPDDIVVRFVQEADADFHARFSAKAKEYRYKVWTAAERDVFRRHYCAWHPYSLHISAMNEALRLLHGTHDFTSFCSAKTSIEDRVRTMYRAEVKADGPMLEFRFVGSGFLYNMVRIIVGTVLEIGQGKRSPADISTLLAAKDRRLAGPTAPAEGLYLWRVYYEDECLVHSLVDG.

Residue D54 is the Nucleophile of the active site. Y112 lines the substrate pocket.

Belongs to the tRNA pseudouridine synthase TruA family. In terms of assembly, homodimer.

It catalyses the reaction uridine(38/39/40) in tRNA = pseudouridine(38/39/40) in tRNA. In terms of biological role, formation of pseudouridine at positions 38, 39 and 40 in the anticodon stem and loop of transfer RNAs. This is tRNA pseudouridine synthase A from Geobacillus kaustophilus (strain HTA426).